Consider the following 346-residue polypeptide: Endo-1,4-beta-xylanase B (346 aa).

Positions M1–G19 are cleaved as a signal peptide. Residues G41–L338 enclose the GH10 domain. Catalysis depends on E153, which acts as the Proton donor. Catalysis depends on E259, which acts as the Nucleophile.

The protein belongs to the glycosyl hydrolase 10 (cellulase F) family.

The enzyme catalyses Endohydrolysis of (1-&gt;4)-beta-D-xylosidic linkages in xylans.. The sequence is that of Endo-1,4-beta-xylanase B (xynB) from Thermotoga neapolitana.